A 1111-amino-acid chain; its full sequence is Lon protease homolog, mitochondrial (1111 aa).

Residues 1-21 (MLRSSRSRLVTRNILLRQFKN) constitute a mitochondrion transit peptide. Disordered regions lie at residues 85–177 (IQLK…AKQP) and 288–311 (PPTS…ENNE). The segment covering 88 to 125 (KQDDKGKDIDQPESENRKKEEEQVPTEEKDNDTAKESE) has biased composition (basic and acidic residues). Over residues 126-135 (TSQQRDSVAE) the composition is skewed to polar residues. Over residues 145–167 (GASGNGESSGNGSGDDGNNGSGN) the composition is skewed to gly residues. The region spanning 185–450 (VMALPISRRP…KALTVLKKEL (266 aa)) is the Lon N-terminal domain. Residues 294–306 (NLKDESDVSKSEG) are compositionally biased toward basic and acidic residues. Residue 602–609 (GPPGVGKT) coordinates ATP. 2 stretches are compositionally biased toward basic and acidic residues: residues 819–835 (ENEE…KQSE) and 853–865 (ELIK…DNKG). The segment at 819 to 866 (ENEEVKDQKDIKVKQSENKSSAEASTVESTTEENELIKTQKSHDNKGS) is disordered. A Lon proteolytic domain is found at 899–1085 (STPPGVVMGL…EDVFQRLFGD (187 aa)). Catalysis depends on residues S991 and K1034.

This sequence belongs to the peptidase S16 family. As to quaternary structure, homohexamer or homoheptamer. Organized in a ring with a central cavity.

The protein localises to the mitochondrion matrix. It catalyses the reaction Hydrolysis of proteins in presence of ATP.. ATP-dependent serine protease that mediates the selective degradation of misfolded, unassembled or oxidatively damaged polypeptides as well as certain short-lived regulatory proteins in the mitochondrial matrix. May also have a chaperone function in the assembly of inner membrane protein complexes. Participates in the regulation of mitochondrial gene expression and in the maintenance of the integrity of the mitochondrial genome. Binds to mitochondrial DNA in a site-specific manner. The protein is Lon protease homolog, mitochondrial of Kluyveromyces lactis (strain ATCC 8585 / CBS 2359 / DSM 70799 / NBRC 1267 / NRRL Y-1140 / WM37) (Yeast).